Here is a 268-residue protein sequence, read N- to C-terminus: Small ribosomal subunit protein uS2 (268 aa).

The disordered stretch occupies residues 228–268; that stretch reads QLDSEQDYEDFDESISDEYDDYEDEEEYEEQDLEVDASEDE. Acidic residues predominate over residues 231-268; the sequence is SEQDYEDFDESISDEYDDYEDEEEYEEQDLEVDASEDE.

It belongs to the universal ribosomal protein uS2 family.

In Rippkaea orientalis (strain PCC 8801 / RF-1) (Cyanothece sp. (strain PCC 8801)), this protein is Small ribosomal subunit protein uS2.